Reading from the N-terminus, the 244-residue chain is Inactive chemokine-binding protein (244 aa).

Positions 1–79 (MHVPASLQQS…STSVEDVDPP (79 aa)) are disordered. Over residues 37-53 (QDQTPTNDKICQSVTEI) the composition is skewed to polar residues. Over residues 54 to 77 (TESESDPDPEVESEDDSTSVEDVD) the composition is skewed to acidic residues.

The protein belongs to the orthopoxvirus OPG001 family.

It is found in the host cytoplasm. Its function is as follows. The protein is truncated in this vaccinal strain and presumably inactive, because the lack of signal peptide prevents the protein of being secreted. In the wild-type viruses inhibits host immune defense by binding to host chemokines. Binds host CC chemokines (beta chemokines) such as RANTES with high affinity, but not CXC or C chemokines (alpha and gamma chemokines). The chain is Inactive chemokine-binding protein (OPG001) from Vaccinia virus (strain Western Reserve) (VACV).